The chain runs to 346 residues: Transposase for insertion sequence element IS1533 (346 aa).

It belongs to the transposase IS1111A/IS1328/IS1533 family.

In terms of biological role, required for the transposition of the insertion element. This chain is Transposase for insertion sequence element IS1533 (tnhA), found in Leptospira borgpetersenii.